Here is a 338-residue protein sequence, read N- to C-terminus: Sporulation protein YdcC (338 aa).

A helical membrane pass occupies residues 8–25; that stretch reads FVLLLTGLLAVLILSACG.

The protein localises to the cell membrane. Required for efficient sporulation. The protein is Sporulation protein YdcC (ydcC) of Bacillus subtilis (strain 168).